A 256-amino-acid polypeptide reads, in one-letter code: Exosome complex component RRP41-like (256 aa).

The protein belongs to the RNase PH family. As to quaternary structure, probable component of the RNA exosome complex. In terms of tissue distribution, highly expressed in imbibed seeds and young seedlings.

The protein resides in the cytoplasm. It localises to the nucleus. Its function is as follows. Non-catalytic component of the RNA exosome complex which has 3'-&gt;5' exoribonuclease activity and participates in a multitude of cellular RNA processing, maturation and degradation events. In vitro, is a processive phosphorolytic exonuclease and requires a single-stranded poly(A) tail on the substrate RNA for its activity. Plays an important role in seed germination and early seedling growth by mediating specific cytoplasmic mRNA decay of transcripts coding for the abscisic acid (ABA) biosynthetic enzymes NCED5 and NCED6, and the ABA signaling transcription factors ABI3 and ABI4. The sequence is that of Exosome complex component RRP41-like from Arabidopsis thaliana (Mouse-ear cress).